The following is a 53-amino-acid chain: MSLLLLTDVDLLINLILLFQKKLSLKEAIVFSLAVFGIVEAYYYWKNRSSESE.

The helical transmembrane segment at 28–45 (AIVFSLAVFGIVEAYYYW) threads the bilayer.

It localises to the host membrane. This is an uncharacterized protein from Acidianus convivator (ABV).